The chain runs to 1032 residues: MQRLKIKRCILSQKEPKVAYDCSMAKKRRAEEQALGVPVNKRKSLLMKPRHYSPDMDCKENPDNRNEDDGLETNDHSTADEIVVKPMDKTLHLPAQESSLPKEDQYACYPELMVKSLMHLGKFEESESVQTVGENLNGNGIQSLKAECDEANECFMVHSDDGRDKVHHSQPPFCSSGDSESDSDNTENGWGSGSNSSEDTDTHKGPKRKLTYNRKDLLEVPEIKAEDDKFIPCENRCDSDTSGRDPQNSHMEPLAVKVQPSFPEVEESESLATVIAESAEVEKAKGSLSLLEQAIALQAERGSVFHHTYKELDRFLLDHLARQRRQPKVTDASGRQIFNNKHSPRPERREAKCPIPGCDGTGHVTGLYPHHRSLSGCPHKVRVPLEILAMHENVLKCPTPGCTGRGHVNSNRNTHRSLSGCPIAAAEKLAMTQDKSQLDSSQTGQGPEQAHRVNLVKQIEFNFRSQAITSPRASASKEQEKFGKVPFDYASFDAQVFGKRPLLQTGQGQKAPPFPESKHFSNPVKFSNGLPSAGAHTQSTVRASSYGHGQYSEDTHIAAAAAILNLSTRCREATDILSNKPQSLRAKGAEIEVDENGTLDLSMKKNRILDKSIPPTSSHTTIATPSSSPFKASSLLVNAAFYQALCDQEGWNVPINYSKSHGKTEEEKEKDPVNSLENLEEKKFAGEASIPSPKPKLHTRDLKKELITCPTPGCDGSGHVTGNYASHRSVSGCPLADKTLKSLMAANSQELKCPTPGCDGSGHVTGNYASHRSLSGCPRARKGGIKMTPTKEEKEDSELRCPVIGCDGQGHISGKYTSHRTASGCPLAAKRQKENPLNGTPLSWKLNKQELPHCPLPGCNGLGHVNNVFVTHRSLSGCPLNAQAIKKVKVSEELMTIKLKATGGIEGDEEIRHLDEEIKELNESNLKIEADMMKLQTQITSMESNLKTIEEENKLIEQSNESLLKELAGLSQALISSLADIQLPQMGPINEQNFEAYVNTLTDMYSNLERDYSPECKALLESIKQAVKGIHV.

Disordered regions lie at residues 29–76, 162–213, and 325–354; these read RAEE…TNDH, GRDK…LTYN, and RQPK…AKCP. Residues 40 to 51 are compositionally biased toward basic residues; it reads NKRKSLLMKPRH. Over residues 52–76 the composition is skewed to basic and acidic residues; that stretch reads YSPDMDCKENPDNRNEDDGLETNDH. 6 CCHHC-type zinc fingers span residues 344–387, 388–431, 700–743, 744–787, 792–835, and 845–888; these read PRPE…PLEI, LAMH…KLAM, RDLK…LKSL, MAAN…GIKM, EEKE…QKEN, and KLNK…IKKV. Zn(2+) is bound by residues C353, C358, H371, C377, C397, C402, H415, C421, C709, C714, H727, C733, C753, C758, H771, C777, C801, C806, H819, C825, C854, C859, H872, and C878. The stretch at 905–974 forms a coiled coil; that stretch reads IEGDEEIRHL…KELAGLSQAL (70 aa).

The protein belongs to the MYT1 family. In terms of tissue distribution, detected in brain.

Its subcellular location is the nucleus. Repressor that binds to DNA sequences containing a bipartite element consisting of a direct repeat of the sequence 5'-AAAGTTT-3' separated by 2-9 nucleotides. Represses basal transcription activity from target promoters. This chain is Suppression of tumorigenicity 18 protein (St18), found in Rattus norvegicus (Rat).